The sequence spans 550 residues: CTP synthase (550 aa).

Residues 1 to 266 form an amidoligase domain region; sequence MNVNYIFVTG…DEYICKYFNL (266 aa). A CTP-binding site is contributed by Ser14. Ser14 provides a ligand contact to UTP. ATP contacts are provided by residues 15–20 and Asp72; that span reads SLGKGI. 2 residues coordinate Mg(2+): Asp72 and Glu140. Residues 147-149, 187-192, and Lys223 contribute to the CTP site; these read DIE and KTKPTQ. UTP contacts are provided by residues 187 to 192 and Lys223; that span reads KTKPTQ. Residues 291 to 546 enclose the Glutamine amidotransferase type-1 domain; sequence TIGIVGKYIR…INAAIQYQCK (256 aa). Position 353 (Gly353) interacts with L-glutamine. Cys380 functions as the Nucleophile; for glutamine hydrolysis in the catalytic mechanism. L-glutamine is bound by residues 381-384, Glu404, and Arg474; that span reads LGMQ. Residues His519 and Glu521 contribute to the active site.

This sequence belongs to the CTP synthase family. As to quaternary structure, homotetramer.

It catalyses the reaction UTP + L-glutamine + ATP + H2O = CTP + L-glutamate + ADP + phosphate + 2 H(+). The catalysed reaction is L-glutamine + H2O = L-glutamate + NH4(+). It carries out the reaction UTP + NH4(+) + ATP = CTP + ADP + phosphate + 2 H(+). It participates in pyrimidine metabolism; CTP biosynthesis via de novo pathway; CTP from UDP: step 2/2. Allosterically activated by GTP, when glutamine is the substrate; GTP has no effect on the reaction when ammonia is the substrate. The allosteric effector GTP functions by stabilizing the protein conformation that binds the tetrahedral intermediate(s) formed during glutamine hydrolysis. Inhibited by the product CTP, via allosteric rather than competitive inhibition. Catalyzes the ATP-dependent amination of UTP to CTP with either L-glutamine or ammonia as the source of nitrogen. Regulates intracellular CTP levels through interactions with the four ribonucleotide triphosphates. This Blochmanniella floridana protein is CTP synthase.